The primary structure comprises 520 residues: Probable methylmalonate-semialdehyde/malonate-semialdehyde dehydrogenase [acylating], mitochondrial (520 aa).

NAD(+) is bound by residues alanine 169, phenylalanine 171, lysine 195, glutamate 198, arginine 199, and serine 248. The Nucleophile role is filled by cysteine 303. Glutamate 403 provides a ligand contact to NAD(+).

Belongs to the aldehyde dehydrogenase family. In terms of assembly, homotetramer.

Its subcellular location is the mitochondrion. It catalyses the reaction 2-methyl-3-oxopropanoate + NAD(+) + CoA + H2O = propanoyl-CoA + hydrogencarbonate + NADH + H(+). The enzyme catalyses 3-oxopropanoate + NAD(+) + CoA + H2O = hydrogencarbonate + acetyl-CoA + NADH + H(+). Functionally, probable malonate and methylmalonate semialdehyde dehydrogenase involved in the catabolism of valine, thymine, and compounds catabolized by way of beta-alanine, including uracil and cytidine. This Drosophila pseudoobscura pseudoobscura (Fruit fly) protein is Probable methylmalonate-semialdehyde/malonate-semialdehyde dehydrogenase [acylating], mitochondrial.